Here is a 27-residue protein sequence, read N- to C-terminus: uncharacterized protein (27 aa).

It localises to the plastid. The protein localises to the chloroplast. This is an uncharacterized protein from Marchantia polymorpha (Common liverwort).